The sequence spans 426 residues: Histidine--tRNA ligase (426 aa).

Belongs to the class-II aminoacyl-tRNA synthetase family.

The protein resides in the cytoplasm. It catalyses the reaction tRNA(His) + L-histidine + ATP = L-histidyl-tRNA(His) + AMP + diphosphate + H(+). The protein is Histidine--tRNA ligase of Saccharolobus islandicus (strain M.16.27) (Sulfolobus islandicus).